We begin with the raw amino-acid sequence, 277 residues long: Putative gamma-glutamylcyclotransferase YkqA (277 aa).

Residue 8-11 (YGTL) participates in substrate binding. Glutamate 205 serves as the catalytic Proton acceptor.

The protein belongs to the gamma-glutamylcyclotransferase family.

In terms of biological role, putative gamma-glutamylcyclotransferase. This Bacillus subtilis (strain 168) protein is Putative gamma-glutamylcyclotransferase YkqA (ykqA).